Here is a 1400-residue protein sequence, read N- to C-terminus: Tensin-2 (1400 aa).

The segment at 31–79 adopts a Phorbol-ester/DAG-type zinc-finger fold; that stretch reads PHSFREKVFRKKTPVCAVCKVTIDGTGVSCRVCKVATHRKCEAKVTSSC. Position 91 is a phosphothreonine (Thr-91). Residues Ser-118 and Ser-120 each carry the phosphoserine modification. The region spanning 122 to 294 is the Phosphatase tensin-type domain; sequence DPLMERRWDL…SYFSGLLSGS (173 aa). Catalysis depends on Cys-231, which acts as the Phosphocysteine intermediate. Positions 299-425 constitute a C2 tensin-type domain; sequence SSPLFLHYVF…ASVEFVFSSS (127 aa). The tract at residues 425-444 is disordered; it reads SPEKVKGNTPRNDPSVSVDY. Residues 433–444 show a composition bias toward polar residues; that stretch reads TPRNDPSVSVDY. Residue Ser-455 is modified to Phosphoserine. Tyr-456 carries the phosphotyrosine modification. Ser-466 carries the post-translational modification Phosphoserine. Position 474 is a phosphothreonine (Thr-474). Phosphoserine is present on Ser-481. A Phosphotyrosine modification is found at Tyr-483. The segment at 488–536 is disordered; that stretch reads RVPRQTPPAPSPELPPPPMLSVSSDSGHSSTLTTEHTAESPGRPPPTAA. Over residues 492 to 506 the composition is skewed to pro residues; it reads QTPPAPSPELPPPPM. At Arg-555 the chain carries Omega-N-methylarginine. Residues 809–1114 are disordered; sequence CGSPSEGRGY…DVTQPPEHPL (306 aa). 5 positions are modified to phosphoserine: Ser-820, Ser-825, Ser-830, Ser-832, and Ser-835. 2 stretches are compositionally biased toward polar residues: residues 898–917 and 929–940; these read CSASSELSGPSTPLHTSSPV and TRSPSLAPTQRL. Position 909 is a phosphothreonine (Thr-909). Phosphoserine occurs at positions 931, 941, and 972. Thr-977 carries the post-translational modification Phosphothreonine. Residues Ser-991 and Ser-1003 each carry the phosphoserine modification. Residues 1046-1056 are compositionally biased toward pro residues; it reads PEPPQSSPTPA. The span at 1082–1098 shows a compositional bias: polar residues; sequence SGQQPSPPARSTNQHVT. The residue at position 1087 (Ser-1087) is a Phosphoserine. In terms of domain architecture, SH2 spans 1131–1238; the sequence is WYKPHLSRDQ…SLPCCLRIPS (108 aa). At Thr-1173 the chain carries Phosphothreonine. Ser-1238 is subject to Phosphoserine. Positions 1266–1399 constitute a PTB domain; that stretch reads ACSVLYLTSV…FITKVLLGQR (134 aa).

It belongs to the PTEN phosphatase protein family. In terms of assembly, interacts with AXL. Interacts with SYK; leading to its phosphorylation. Interacts with SQSTM1 (via PB1 domain); the interaction leads to sequestration of TNS2 in cytoplasmic aggregates with SQSTM1 and promotes TNS2 ubiquitination and proteasomal degradation. Post-translationally, ubiquitinated following sequestration in cytoplasmic aggregates with SQSTM1, leading to proteasomal degradation. In the adult kidney, expressed mainly in glomeruli (at protein level). In the newborn kidney, localizes on the basal surface of podocytes along the glomerular basement membrane and not in endothelial cells. Low expression levels in anabolic skeletal muscles.

The protein resides in the cell junction. The protein localises to the focal adhesion. It localises to the cell membrane. It is found in the cytoplasm. The catalysed reaction is O-phospho-L-tyrosyl-[protein] + H2O = L-tyrosyl-[protein] + phosphate. Tyrosine-protein phosphatase which regulates cell motility, proliferation and muscle-response to insulin. Phosphatase activity is mediated by binding to phosphatidylinositol-3,4,5-triphosphate (PtdIns(3,4,5)P3) via the SH2 domain. In muscles and under catabolic conditions, dephosphorylates IRS1 leading to its degradation and muscle atrophy. Negatively regulates PI3K-AKT pathway activation. Dephosphorylates nephrin NPHS1 in podocytes which affects mTORC1 complex activity. Under normal glucose conditions, NPHS1 outcompetes IRS1 for binding to phosphatidylinositol 3-kinase (PI3K) which balances mTORC1 activity but high glucose conditions lead to up-regulation of TNS2, increased NPHS1 dephosphorylation and activation of mTORC1, contributing to podocyte hypertrophy and proteinuria. Required for correct podocyte morphology, podocyte-glomerular basement membrane interaction and integrity of the glomerular filtration barrier. Enhances RHOA activation in the presence of DLC1. Plays a role in promoting DLC1-dependent remodeling of the extracellular matrix. This is Tensin-2 (Tns2) from Mus musculus (Mouse).